The chain runs to 179 residues: ATP synthase subunit delta (179 aa).

Belongs to the ATPase delta chain family. F-type ATPases have 2 components, F(1) - the catalytic core - and F(0) - the membrane proton channel. F(1) has five subunits: alpha(3), beta(3), gamma(1), delta(1), epsilon(1). F(0) has three main subunits: a(1), b(2) and c(10-14). The alpha and beta chains form an alternating ring which encloses part of the gamma chain. F(1) is attached to F(0) by a central stalk formed by the gamma and epsilon chains, while a peripheral stalk is formed by the delta and b chains.

The protein resides in the cell inner membrane. F(1)F(0) ATP synthase produces ATP from ADP in the presence of a proton or sodium gradient. F-type ATPases consist of two structural domains, F(1) containing the extramembraneous catalytic core and F(0) containing the membrane proton channel, linked together by a central stalk and a peripheral stalk. During catalysis, ATP synthesis in the catalytic domain of F(1) is coupled via a rotary mechanism of the central stalk subunits to proton translocation. In terms of biological role, this protein is part of the stalk that links CF(0) to CF(1). It either transmits conformational changes from CF(0) to CF(1) or is implicated in proton conduction. The polypeptide is ATP synthase subunit delta (Chlorobium chlorochromatii (strain CaD3)).